Consider the following 692-residue polypeptide: Elongation factor G (692 aa).

Residues 8–282 (ENTRNIGIMA…AVIDYLPSPL (275 aa)) form the tr-type G domain. Residues 17–24 (AHIDAGKT), 81–85 (DTPGH), and 135–138 (NKMD) each bind GTP.

This sequence belongs to the TRAFAC class translation factor GTPase superfamily. Classic translation factor GTPase family. EF-G/EF-2 subfamily.

The protein localises to the cytoplasm. Functionally, catalyzes the GTP-dependent ribosomal translocation step during translation elongation. During this step, the ribosome changes from the pre-translocational (PRE) to the post-translocational (POST) state as the newly formed A-site-bound peptidyl-tRNA and P-site-bound deacylated tRNA move to the P and E sites, respectively. Catalyzes the coordinated movement of the two tRNA molecules, the mRNA and conformational changes in the ribosome. This Bacillus cytotoxicus (strain DSM 22905 / CIP 110041 / 391-98 / NVH 391-98) protein is Elongation factor G.